An 814-amino-acid chain; its full sequence is Kinesin-like protein KIF6 (814 aa).

The 341-residue stretch at 5–345 (TIQIFARVKP…CRFAQRVALI (341 aa)) folds into the Kinesin motor domain. 97–104 (GQTGSGKT) is a binding site for ATP. Coiled coils occupy residues 356 to 385 (NPRL…QRTE), 456 to 494 (LKEE…EALH), and 588 to 683 (EAKA…KEFE). Positions 752–788 (LPSPCPSPHSQKQSSTSTPLEDSIPKRPVSSIPLTGD) are disordered. The span at 759-771 (PHSQKQSSTSTPL) shows a compositional bias: polar residues.

The protein belongs to the TRAFAC class myosin-kinesin ATPase superfamily. Kinesin family.

Its subcellular location is the cytoplasm. The protein resides in the cytoskeleton. The protein is Kinesin-like protein KIF6 (KIF6) of Homo sapiens (Human).